The chain runs to 72 residues: Small, acid-soluble spore protein C (72 aa).

It belongs to the alpha/beta-type SASP family.

Its function is as follows. SASP are bound to spore DNA. They are double-stranded DNA-binding proteins that cause DNA to change to an a-like conformation. They protect the DNA backbone from chemical and enzymatic cleavage and are thus involved in dormant spore's high resistance to UV light. The chain is Small, acid-soluble spore protein C (sasP-C) from Priestia megaterium (Bacillus megaterium).